Here is a 148-residue protein sequence, read N- to C-terminus: Outer envelope pore protein 16-1, chloroplastic (148 aa).

The contains 4 beta strands stretch occupies residues 2–73 (PSSTFSGTVS…EHALKKLCKE (72 aa)). The next 3 helical transmembrane spans lie at 75–91 (VYWG…EYGI), 102–118 (NAML…SAVG), and 125–142 (IVID…SQFV).

The protein belongs to the Tim17/Tim22/Tim23 family. Plastid outer envelope porin OEP16 (TC 1.B.30) subfamily. As to quaternary structure, homodimer and oligomers in membrane. Forms large complexes including TOC33, pPORA and OEP161 during pPORA import into plastids at the plastid envelope membrane. In terms of tissue distribution, expressed predominantly in leaves and cotyledons.

Its subcellular location is the plastid. It localises to the chloroplast outer membrane. It is found in the etioplast membrane. Stimulated by GTP. In terms of biological role, voltage-dependent high-conductance channel with a slight cation-selectivity; selective for amino acids but excludes triosephosphates or uncharged sugars. Non-essential amino acid-selective channel protein and translocation pore for NADPH:protochlorophyllide oxidoreductase A (PORA) and possibly PORB. Involved in PORA precursor (pPORA) import and thus confers photoprotection onto etiolated seedlings during greening. The sequence is that of Outer envelope pore protein 16-1, chloroplastic (OEP161) from Arabidopsis thaliana (Mouse-ear cress).